The primary structure comprises 457 residues: tRNA modification GTPase MnmE (457 aa).

Residues Arg25, Glu87, and Arg126 each coordinate (6S)-5-formyl-5,6,7,8-tetrahydrofolate. A TrmE-type G domain is found at Gly223–Phe377. Asn233 contributes to the K(+) binding site. Residues Asn233–Ser238, Thr252–Thr258, and Asp277–Gly280 each bind GTP. Ser237 contacts Mg(2+). The K(+) site is built by Thr252, Ile254, and Thr257. Mg(2+) is bound at residue Thr258. Lys457 is a binding site for (6S)-5-formyl-5,6,7,8-tetrahydrofolate.

It belongs to the TRAFAC class TrmE-Era-EngA-EngB-Septin-like GTPase superfamily. TrmE GTPase family. As to quaternary structure, homodimer. Heterotetramer of two MnmE and two MnmG subunits. K(+) serves as cofactor.

Its subcellular location is the cytoplasm. In terms of biological role, exhibits a very high intrinsic GTPase hydrolysis rate. Involved in the addition of a carboxymethylaminomethyl (cmnm) group at the wobble position (U34) of certain tRNAs, forming tRNA-cmnm(5)s(2)U34. This Streptococcus sanguinis (strain SK36) protein is tRNA modification GTPase MnmE.